A 264-amino-acid polypeptide reads, in one-letter code: Type II iodothyronine deiodinase (264 aa).

The Lumenal segment spans residues Met1–Asp7. The helical; Signal-anchor for type III membrane protein transmembrane segment at Leu8–Tyr28 threads the bilayer. At Asp29–Lys264 the chain is on the cytoplasmic side. Sec124 is an active-site residue. Residue Sec124 is a non-standard amino acid, selenocysteine.

Belongs to the iodothyronine deiodinase family. In terms of assembly, predominantly monomer. Can form homodimers but homodimerization is not essential for enzyme activity. As to expression, high levels seen in the metamorphosing tail.

It is found in the endoplasmic reticulum membrane. The enzyme catalyses 3,3',5-triiodo-L-thyronine + iodide + A + H(+) = L-thyroxine + AH2. It carries out the reaction 3,3'-diiodo-L-thyronine + iodide + A + H(+) = 3,3',5'-triiodo-L-thyronine + AH2. The catalysed reaction is 3'-iodo-L-thyronine + iodide + A + H(+) = 3',5'-diiodo-L-thyronine + AH2. It catalyses the reaction 3,3'-diiodothyronamine + iodide + A + H(+) = 3,3',5'-triiodothyronamine + AH2. The enzyme catalyses 3'-iodothyronamine + iodide + A + H(+) = 3',5'-diiodothyronamine + AH2. Its activity is regulated as follows. Not inhibited by N(6)-propylthiouracil. Functionally, plays a crucial role in the metabolism of thyroid hormones (TH) and has specific roles in TH activation and inactivation by deiodination. Catalyzes the deiodination of L-thyroxine (T4) to 3,5,3'-triiodothyronine (T3) and 3',5'-diiodothyronine (3',5'-T2) to 3'-monoiodothyronine (3'-T1) via outer-ring deiodination (ORD). Catalyzes the deiodination of 3,3',5'-triiodothyronine (rT3) to 3,3'-diiodothyronine (3,3'-T2) via ORD. Catalyzes the phenolic ring deiodinations of 3,3',5'-triiodothyronamine and 3',5'- diiodothyronamine. The chain is Type II iodothyronine deiodinase (dio2) from Aquarana catesbeiana (American bullfrog).